A 366-amino-acid chain; its full sequence is Ribosomal RNA large subunit methyltransferase M (366 aa).

S-adenosyl-L-methionine is bound by residues Ser188, 221–224 (CPGG), Asp240, Asp260, and Asp277. Lys306 acts as the Proton acceptor in catalysis.

This sequence belongs to the class I-like SAM-binding methyltransferase superfamily. RNA methyltransferase RlmE family. RlmM subfamily. As to quaternary structure, monomer.

The protein resides in the cytoplasm. The catalysed reaction is cytidine(2498) in 23S rRNA + S-adenosyl-L-methionine = 2'-O-methylcytidine(2498) in 23S rRNA + S-adenosyl-L-homocysteine + H(+). Functionally, catalyzes the 2'-O-methylation at nucleotide C2498 in 23S rRNA. The polypeptide is Ribosomal RNA large subunit methyltransferase M (Dickeya chrysanthemi (strain Ech1591) (Dickeya zeae (strain Ech1591))).